A 270-amino-acid polypeptide reads, in one-letter code: Carboxy-terminal domain RNA polymerase II polypeptide A small phosphatase 2 (270 aa).

Ser-5 is modified (phosphoserine). One can recognise an FCP1 homology domain in the interval 96 to 254 (QDQGRICVVI…LNLIPVFEEL (159 aa)). Catalysis depends on Asp-106, which acts as the 4-aspartylphosphate intermediate. Mg(2+) contacts are provided by Asp-106, Asp-108, and Asn-217. Asp-108 (proton donor) is an active-site residue.

Monomer. Interacts with REST. It depends on Mg(2+) as a cofactor. Expression is restricted to non-neuronal tissues.

It is found in the nucleus. The catalysed reaction is O-phospho-L-seryl-[protein] + H2O = L-seryl-[protein] + phosphate. The enzyme catalyses O-phospho-L-threonyl-[protein] + H2O = L-threonyl-[protein] + phosphate. Preferentially catalyzes the dephosphorylation of 'Ser-5' within the tandem 7 residue repeats in the C-terminal domain (CTD) of the largest RNA polymerase II subunit POLR2A. Negatively regulates RNA polymerase II transcription, possibly by controlling the transition from initiation/capping to processive transcript elongation. Recruited by REST to neuronal genes that contain RE-1 elements, leading to neuronal gene silencing in non-neuronal cells. In Mus musculus (Mouse), this protein is Carboxy-terminal domain RNA polymerase II polypeptide A small phosphatase 2 (Ctdsp2).